Consider the following 462-residue polypeptide: Microspherule protein 1 (462 aa).

Residue Met-1 is modified to N-acetylmethionine. Residues 1–130 (MDKDSQGLLD…KSKQPLQVTK (130 aa)) form a disordered region. Residue Ser-22 is modified to Phosphoserine. A compositionally biased stretch (basic residues) spans 43–55 (PKRRSSSRFIKRK). Residue Ser-102 is modified to Phosphoserine. Phosphothreonine is present on Thr-103. The span at 103–112 (TPVPPSPAPA) shows a compositional bias: pro residues. The residue at position 108 (Ser-108) is a Phosphoserine. Positions 113–123 (PGLTKRVKKSK) match the Nuclear localization signal motif. N6-acetyllysine is present on residues Lys-123 and Lys-130. Ser-282 carries the post-translational modification Phosphoserine. Residues 301 to 335 (LEHELMVADRRQKREIRQLEQELHKWQVLVDSITG) are a coiled coil. The FHA domain maps to 363-419 (ITLGRATKDNQIDVDLSLEGPAWKISRKQGVIKLKNNGDFFIANEGRRPIYIDGRPV). The UBR5-degron signature appears at 389-396 (RKQGVIKL).

Component of the chromatin remodeling INO80 complex; specifically part of a complex module associated with the N-terminus of INO80. Component of some MLL1/MLL complex, at least composed of the core components KMT2A/MLL1, ASH2L, HCFC1, WDR5 and RBBP5, as well as the facultative components BACC1, CHD8, E2F6, HSP70, INO80C, KANSL1, LAS1L, MAX, MCRS1, MGA, KAT8/MOF, PELP1, PHF20, PRP31, RING2, RUVB1/TIP49A, RUVB2/TIP49B, SENP3, TAF1, TAF4, TAF6, TAF7, TAF9 and TEX10. Component of the NSL complex at least composed of MOF/KAT8, KANSL1, KANSL2, KANSL3, MCRS1, PHF20, OGT1/OGT, WDR5 and HCFC1. Interacts with NOP2. Interacts with PINX1. Interacts with TERT. Interacts with CCDC85B. Interacts with DAXX. Interacts (via N-terminus) with FMR1 (via phosphorylated form). Interacts with FXR1 and FXR2. Interacts (via C-terminus) with NDE1 (via C-terminus); phosphorylation of NDE1 inhibits the interaction. Interacts (via C-terminus) with ZNF375. Interacts (via C-terminus) with active GTP-bound RHEB (via N-terminus) under conditions of high amino acid concentration; the interaction promotes mTORC1 complex activation by RHEB. Interacts (via N-terminus) with the mTORC1 complex; the interaction ensures mTORC1 activation by RHEB. Interacts with DYNC1I1; the interaction is required for the proper distribution of centriolar satellites. Interacts with TTBK2; the interaction is required for recruitment of TTBK2 to the mother centriole. Interacts with KIF2A; the interaction occurs during mitosis and facilitates chromosome alignment. As to quaternary structure, (Microbial infection) Interacts with Herpes simplex virus ICP22. Ubiquitinated by UBR5 when not assembled in the INO80 complex, leading to its degradation: UBR5 recognizes and binds a degron that is not accessible when MCRS1 is part of the INO80 complex. In terms of processing, phosphorylated by AURKA on Ser-35 and/or Ser-36 during mitosis which is required for kinetochore fiber assembly and mitotic progression but not for spindle localization or for chromosome-induced microtuble aster formation. Also phosphorylated by AURKA on Ser-85 and/or Ser-87. Phosphorylated by TTK/MPS1 which enhances recruitment of KIF2A to the minus end of spindle microtubules and facilitates precise chromosome segregation. As to expression, detected in testis, and at lower levels in spleen, thymus, prostate, uterus, small intestine, colon and leukocytes.

Its subcellular location is the nucleus. It is found in the nucleolus. It localises to the cytoplasm. The protein resides in the cytoskeleton. The protein localises to the microtubule organizing center. Its subcellular location is the centrosome. It is found in the spindle pole. It localises to the chromosome. The protein resides in the centromere. The protein localises to the kinetochore. Its subcellular location is the lysosome. It is found in the centriolar satellite. Functionally, modulates the transcription repressor activity of DAXX by recruiting it to the nucleolus. As part of the NSL complex, may be involved in acetylation of nucleosomal histone H4 on several lysine residues. Putative regulatory component of the chromatin remodeling INO80 complex which is involved in transcriptional regulation, DNA replication and probably DNA repair. May also be an inhibitor of TERT telomerase activity. Binds to G-quadruplex structures in mRNA. Binds to RNA homomer poly(G) and poly(U). Maintains RHEB at the lysosome in its active GTP-bound form and prevents its interaction with the mTORC1 complex inhibitor TSC2, ensuring activation of the mTORC1 complex by RHEB. Stabilizes the minus ends of kinetochore fibers by protecting them from depolymerization, ensuring functional spindle assembly during mitosis. Following phosphorylation by TTK/MPS1, enhances recruitment of KIF2A to the minus ends of mitotic spindle microtubules which promotes chromosome alignment. Regulates the morphology of microtubule minus ends in mitotic spindle by maintaining them in a closed conformation characterized by the presence of an electron-dense cap. Regulates G2/M transition and spindle assembly during oocyte meiosis. Mediates histone modifications and transcriptional regulation in germinal vesicle oocytes which are required for meiotic progression. Also regulates microtubule nucleation and spindle assembly by activating aurora kinases during oocyte meiosis. Contributes to the establishment of centriolar satellites and also plays a role in primary cilium formation by recruiting TTBK2 to the mother centriole which is necessary for removal of the CP110 cap from the mother centriole, an early step in ciliogenesis. Required for epiblast development during early embryogenesis. Essential for cell viability. In Homo sapiens (Human), this protein is Microspherule protein 1 (MCRS1).